We begin with the raw amino-acid sequence, 455 residues long: Argininosuccinate lyase (455 aa).

The protein belongs to the lyase 1 family. Argininosuccinate lyase subfamily.

It is found in the cytoplasm. The enzyme catalyses 2-(N(omega)-L-arginino)succinate = fumarate + L-arginine. It participates in amino-acid biosynthesis; L-arginine biosynthesis; L-arginine from L-ornithine and carbamoyl phosphate: step 3/3. The sequence is that of Argininosuccinate lyase from Shewanella baltica (strain OS155 / ATCC BAA-1091).